A 436-amino-acid polypeptide reads, in one-letter code: MSTGFFGDIQKIKYEGPDSTNPLAFRYYQPDEIVLGKRMEDHLRFAVAYWHTFTWPGGDPFGGQTFLRPWFEDTMKAAKLKADVAFEFFSLLGAPYYCFHDADVRPEGKNFAENTKNLNEIVDYFAEKQAATGTKLLWGTANLFSNRRYMSGAATNPDPDVFAFAAATVKTCIDATQKLGGENYVLWGGREGYETLLNTDLKRELDQLGRFLNLVVEYKHKIGFKGTILIEPKPQEPTKHQYDYDVATVYGFLKKHGLENEVKVNIEQGHAILAGHSFEHELALANALGIFGSIDMNRNDYQSGWDTDQFPNNVPEMALAYYHVLAGGGFKTGGTNFDSKLRRQSLDPADLLIGHIGGMDCCARGLKAAAKMIEDKALSQPLADRYAGWESVEAQKLFRGEYSLDEIANWVESKDVNPQPKSGKQELLENVVNRYV.

Residues H100 and D103 contribute to the active site. Mg(2+) contacts are provided by E231, E267, H270, D295, D306, D308, and D338.

This sequence belongs to the xylose isomerase family. In terms of assembly, homotetramer. Mg(2+) is required as a cofactor.

The protein resides in the cytoplasm. It carries out the reaction alpha-D-xylose = alpha-D-xylulofuranose. The chain is Xylose isomerase from Rhizobium etli (strain ATCC 51251 / DSM 11541 / JCM 21823 / NBRC 15573 / CFN 42).